We begin with the raw amino-acid sequence, 266 residues long: Maltodextrose utilization protein MalA (266 aa).

Functionally, has a role in maltotetraose utilization. The chain is Maltodextrose utilization protein MalA (malA) from Streptococcus pneumoniae (strain ATCC BAA-255 / R6).